A 65-amino-acid polypeptide reads, in one-letter code: Large ribosomal subunit protein bL35 (65 aa).

It belongs to the bacterial ribosomal protein bL35 family.

The protein is Large ribosomal subunit protein bL35 of Aliarcobacter butzleri (strain RM4018) (Arcobacter butzleri).